Consider the following 165-residue polypeptide: 3-isopropylmalate dehydratase small subunit (165 aa).

It belongs to the LeuD family. LeuD type 2 subfamily. In terms of assembly, heterodimer of LeuC and LeuD.

It catalyses the reaction (2R,3S)-3-isopropylmalate = (2S)-2-isopropylmalate. It functions in the pathway amino-acid biosynthesis; L-leucine biosynthesis; L-leucine from 3-methyl-2-oxobutanoate: step 2/4. Catalyzes the isomerization between 2-isopropylmalate and 3-isopropylmalate, via the formation of 2-isopropylmaleate. The sequence is that of 3-isopropylmalate dehydratase small subunit from Saccharolobus islandicus (strain M.14.25 / Kamchatka #1) (Sulfolobus islandicus).